Here is a 475-residue protein sequence, read N- to C-terminus: Exodeoxyribonuclease I (475 aa).

Positions 13 to 192 (FHDYETFGTH…AMADVYATIA (180 aa)) constitute an Exonuclease domain. Asp-15 and Glu-17 together coordinate Mg(2+). Glu-17 and Arg-165 together coordinate substrate. A Mg(2+)-binding site is contributed by Asp-186. The 154-residue stretch at 202–355 (PRLFDYLFTH…KVVAIFAEAE (154 aa)) folds into the ExoI SH3-like domain. The ExoI C-terminal domain occupies 358 to 475 (TPSDNVDAQL…ALWQYAEEIV (118 aa)).

Monomer. Interacts with ssb (via C-terminus); this interaction stimulates the exonuclease activity by recruiting the enzyme to its substrate. Mg(2+) is required as a cofactor.

The enzyme catalyses Exonucleolytic cleavage in the 3'- to 5'-direction to yield nucleoside 5'-phosphates.. Inhibited by 10 mM EDTA. Degrades single-stranded DNA (ssDNA) in a highly processive manner. Also functions as a DNA deoxyribophosphodiesterase that releases deoxyribose-phosphate moieties following the cleavage of DNA at an apurinic/apyrimidinic (AP) site by either an AP endonuclease or AP lyase. This Escherichia coli (strain K12) protein is Exodeoxyribonuclease I (sbcB).